The primary structure comprises 224 residues: Uridylate kinase (224 aa).

6-10 lines the ATP pocket; that stretch reads KVTGK. Gly41 contributes to the UMP binding site. The ATP site is built by Gly42 and Arg46. Residues Asp63 and 111–117 contribute to the UMP site; that span reads FQPGQST. Residues Thr137, Phe143, and Asp146 each coordinate ATP.

Belongs to the UMP kinase family. In terms of assembly, homohexamer.

It is found in the cytoplasm. The enzyme catalyses UMP + ATP = UDP + ADP. Its pathway is pyrimidine metabolism; CTP biosynthesis via de novo pathway; UDP from UMP (UMPK route): step 1/1. With respect to regulation, inhibited by UTP. In terms of biological role, catalyzes the reversible phosphorylation of UMP to UDP. The chain is Uridylate kinase from Metallosphaera sedula (strain ATCC 51363 / DSM 5348 / JCM 9185 / NBRC 15509 / TH2).